Reading from the N-terminus, the 130-residue chain is MIQSFTRLNVADNSGAKEIMCIKVLGGSHKRYASVGSVIVASVKKAIPNGKVKRGQVVKAVVVRTKKEIQRKNGSLVRFDDNAAVILDAKKDPVGTRIFGPVSREVRYANFMKIISLAPELYNEKRNQKK.

It belongs to the universal ribosomal protein uL14 family. In terms of assembly, part of the 50S ribosomal subunit. Forms a cluster with proteins L3 and L19. In the 70S ribosome, L14 and L19 interact and together make contacts with the 16S rRNA in bridges B5 and B8.

Binds to 23S rRNA. Forms part of two intersubunit bridges in the 70S ribosome. The sequence is that of Large ribosomal subunit protein uL14 from Helicobacter pylori (strain P12).